The following is a 217-amino-acid chain: Adenylate kinase (217 aa).

10–15 is an ATP binding site; it reads GAGKGT. The interval 30 to 59 is NMP; it reads STGDIFRKNISDKTPLGIEAKEYLDKGQLV. Residues threonine 31, arginine 36, 57-59, 85-88, and glutamine 92 each bind AMP; these read QLV and GFPR. The segment at 126–163 is LID; it reads GRRICPSCGASYHVKFNPPKLKDKCDICNNDIIQRKDD. Arginine 127 provides a ligand contact to ATP. Positions 130 and 133 each coordinate Zn(2+). 136 to 137 contacts ATP; the sequence is SY. Zn(2+)-binding residues include cysteine 150 and cysteine 153. Residues arginine 160 and arginine 171 each coordinate AMP. Glycine 199 serves as a coordination point for ATP.

The protein belongs to the adenylate kinase family. As to quaternary structure, monomer.

It is found in the cytoplasm. The catalysed reaction is AMP + ATP = 2 ADP. Its pathway is purine metabolism; AMP biosynthesis via salvage pathway; AMP from ADP: step 1/1. Functionally, catalyzes the reversible transfer of the terminal phosphate group between ATP and AMP. Plays an important role in cellular energy homeostasis and in adenine nucleotide metabolism. The chain is Adenylate kinase from Clostridium kluyveri (strain NBRC 12016).